We begin with the raw amino-acid sequence, 183 residues long: Acyl-homoserine-lactone synthase (183 aa).

It belongs to the autoinducer synthase family.

It catalyses the reaction a fatty acyl-[ACP] + S-adenosyl-L-methionine = an N-acyl-L-homoserine lactone + S-methyl-5'-thioadenosine + holo-[ACP] + H(+). Involved in the synthesis of the acyl-homoserine lactone (AHL) signal N-(3-hydroxydodecanoyl)-L-HSL (3-hydroxy-C(12)-HSL or OH-dDHL). Probably part of a quorum-sensing system with AnoR. The protein is Acyl-homoserine-lactone synthase of Acinetobacter nosocomialis.